The following is a 505-amino-acid chain: Probable cytosol aminopeptidase (505 aa).

K269 and D274 together coordinate Mn(2+). Residue K281 is part of the active site. Mn(2+) contacts are provided by D292, D351, and E353. The active site involves R355.

Belongs to the peptidase M17 family. The cofactor is Mn(2+).

The protein localises to the cytoplasm. The catalysed reaction is Release of an N-terminal amino acid, Xaa-|-Yaa-, in which Xaa is preferably Leu, but may be other amino acids including Pro although not Arg or Lys, and Yaa may be Pro. Amino acid amides and methyl esters are also readily hydrolyzed, but rates on arylamides are exceedingly low.. It carries out the reaction Release of an N-terminal amino acid, preferentially leucine, but not glutamic or aspartic acids.. In terms of biological role, presumably involved in the processing and regular turnover of intracellular proteins. Catalyzes the removal of unsubstituted N-terminal amino acids from various peptides. This is Probable cytosol aminopeptidase from Rhodococcus jostii (strain RHA1).